Reading from the N-terminus, the 130-residue chain is Small ribosomal subunit protein uS11 (130 aa).

It belongs to the universal ribosomal protein uS11 family. Part of the 30S ribosomal subunit. Interacts with proteins S7 and S18. Binds to IF-3.

Located on the platform of the 30S subunit, it bridges several disparate RNA helices of the 16S rRNA. Forms part of the Shine-Dalgarno cleft in the 70S ribosome. The chain is Small ribosomal subunit protein uS11 from Nitratiruptor sp. (strain SB155-2).